We begin with the raw amino-acid sequence, 389 residues long: Phospho-N-acetylmuramoyl-pentapeptide-transferase (389 aa).

The next 10 helical transmembrane spans lie at 25–45, 74–94, 97–117, 134–154, 190–210, 222–242, 259–279, 286–306, 311–331, and 366–386; these read RAVMASLTALVIGLGFGPFVI, MGGVLVLIGIAVSTLLWADWG, FIWIVLLVTLGYGAIGWVDDY, FFWQTVIGLFAAAYLAFSVSE, ISYPLGVFGFIILTYLVIVGS, GLVIMPVVLVGSALGVFAYVM, AGELLIFCSAMAGAGLAFLWF, VFMGDVGALALGGALGTIAVI, IVLFIMGGIFVAETVSVMLQV, and QVVVRFWVITMMLVLIGLSTL.

This sequence belongs to the glycosyltransferase 4 family. MraY subfamily. Mg(2+) is required as a cofactor.

The protein resides in the cell inner membrane. It carries out the reaction UDP-N-acetyl-alpha-D-muramoyl-L-alanyl-gamma-D-glutamyl-meso-2,6-diaminopimeloyl-D-alanyl-D-alanine + di-trans,octa-cis-undecaprenyl phosphate = di-trans,octa-cis-undecaprenyl diphospho-N-acetyl-alpha-D-muramoyl-L-alanyl-D-glutamyl-meso-2,6-diaminopimeloyl-D-alanyl-D-alanine + UMP. It functions in the pathway cell wall biogenesis; peptidoglycan biosynthesis. Functionally, catalyzes the initial step of the lipid cycle reactions in the biosynthesis of the cell wall peptidoglycan: transfers peptidoglycan precursor phospho-MurNAc-pentapeptide from UDP-MurNAc-pentapeptide onto the lipid carrier undecaprenyl phosphate, yielding undecaprenyl-pyrophosphoryl-MurNAc-pentapeptide, known as lipid I. The chain is Phospho-N-acetylmuramoyl-pentapeptide-transferase from Ralstonia pickettii (strain 12J).